A 275-amino-acid polypeptide reads, in one-letter code: Large ribosomal subunit protein uL2 (275 aa).

The tract at residues 222–275 (GVAMNPVDHPMGGGEGRSSGGRHPCSPWGMPTKGYKTRKNKTTDKFIVRKRNKR) is disordered.

This sequence belongs to the universal ribosomal protein uL2 family. Part of the 50S ribosomal subunit. Forms a bridge to the 30S subunit in the 70S ribosome.

One of the primary rRNA binding proteins. Required for association of the 30S and 50S subunits to form the 70S ribosome, for tRNA binding and peptide bond formation. It has been suggested to have peptidyltransferase activity; this is somewhat controversial. Makes several contacts with the 16S rRNA in the 70S ribosome. This chain is Large ribosomal subunit protein uL2, found in Desulfatibacillum aliphaticivorans.